The chain runs to 357 residues: 4-hydroxy-2-oxovalerate aldolase (357 aa).

Positions 1-21 are disordered; the sequence is MSQEAARDAAAGRPVQIHDPT. One can recognise a Pyruvate carboxyltransferase domain in the interval 15–265; the sequence is VQIHDPTLRD…RTGIDLYRLL (251 aa). 23–24 contacts substrate; sequence RD. A Mn(2+)-binding site is contributed by D24. Catalysis depends on H27, which acts as the Proton acceptor. Residues S177 and H204 each coordinate substrate. Mn(2+) is bound by residues H204 and H206.

Belongs to the 4-hydroxy-2-oxovalerate aldolase family.

The enzyme catalyses (S)-4-hydroxy-2-oxopentanoate = acetaldehyde + pyruvate. Involved in the biosynthesis of the peptidyl nucleoside antibiotic nikkomycin. In Streptomyces tendae, this protein is 4-hydroxy-2-oxovalerate aldolase.